The following is a 162-amino-acid chain: Probable chemoreceptor glutamine deamidase CheD (162 aa).

The protein belongs to the CheD family.

The enzyme catalyses L-glutaminyl-[protein] + H2O = L-glutamyl-[protein] + NH4(+). Functionally, probably deamidates glutamine residues to glutamate on methyl-accepting chemotaxis receptors (MCPs), playing an important role in chemotaxis. In Clostridium botulinum (strain ATCC 19397 / Type A), this protein is Probable chemoreceptor glutamine deamidase CheD.